Reading from the N-terminus, the 122-residue chain is Fluoride-specific ion channel FluC 2 (122 aa).

The next 4 membrane-spanning stretches (helical) occupy residues 1-21 (MAWL…FLLS), 33-53 (PLGT…LLAL), 62-82 (VTLA…TFTY), and 102-122 (GSIL…GSLF). Positions 72 and 75 each coordinate Na(+).

This sequence belongs to the fluoride channel Fluc/FEX (TC 1.A.43) family.

Its subcellular location is the cell membrane. The catalysed reaction is fluoride(in) = fluoride(out). Its activity is regulated as follows. Na(+) is not transported, but it plays an essential structural role and its presence is essential for fluoride channel function. Fluoride-specific ion channel. Important for reducing fluoride concentration in the cell, thus reducing its toxicity. The polypeptide is Fluoride-specific ion channel FluC 2 (Moorella thermoacetica (strain ATCC 39073 / JCM 9320)).